Here is a 160-residue protein sequence, read N- to C-terminus: Archaemetzincin (160 aa).

A Zn(2+)-binding site is contributed by H117. Catalysis depends on E118, which acts as the Proton acceptor. Zn(2+) is bound by residues H121, H127, C128, C132, C151, and C154.

This sequence belongs to the peptidase M54 family. Monomer. It depends on Zn(2+) as a cofactor.

Probable zinc metalloprotease whose natural substrate is unknown. This Archaeoglobus fulgidus (strain ATCC 49558 / DSM 4304 / JCM 9628 / NBRC 100126 / VC-16) protein is Archaemetzincin.